An 870-amino-acid chain; its full sequence is Histidine biosynthesis trifunctional protein (870 aa).

The segment at 1-285 (METTLPLPFL…KFVVKQKGRF (285 aa)) is phosphoribosyl-AMP cyclohydrolase. A phosphoribosyl-ATP pyrophosphohydrolase region spans residues 286–367 (CHLDQSGCFG…FYFALTRAVA (82 aa)). Residues 368 to 870 (AGVTLADIER…IRLEHMSKSN (503 aa)) form a histidinol dehydrogenase region. Positions 693 and 696 each coordinate Zn(2+). Catalysis depends on residues glutamate 762 and histidine 763. 2 residues coordinate Zn(2+): aspartate 796 and histidine 855.

This sequence in the C-terminal section; belongs to the histidinol dehydrogenase family. It depends on Zn(2+) as a cofactor.

The enzyme catalyses 1-(5-phospho-beta-D-ribosyl)-5'-AMP + H2O = 1-(5-phospho-beta-D-ribosyl)-5-[(5-phospho-beta-D-ribosylamino)methylideneamino]imidazole-4-carboxamide. It catalyses the reaction 1-(5-phospho-beta-D-ribosyl)-ATP + H2O = 1-(5-phospho-beta-D-ribosyl)-5'-AMP + diphosphate + H(+). The catalysed reaction is L-histidinol + 2 NAD(+) + H2O = L-histidine + 2 NADH + 3 H(+). The protein operates within amino-acid biosynthesis; L-histidine biosynthesis; L-histidine from 5-phospho-alpha-D-ribose 1-diphosphate: step 2/9. It participates in amino-acid biosynthesis; L-histidine biosynthesis; L-histidine from 5-phospho-alpha-D-ribose 1-diphosphate: step 3/9. It functions in the pathway amino-acid biosynthesis; L-histidine biosynthesis; L-histidine from 5-phospho-alpha-D-ribose 1-diphosphate: step 9/9. This Neurospora crassa (strain ATCC 24698 / 74-OR23-1A / CBS 708.71 / DSM 1257 / FGSC 987) protein is Histidine biosynthesis trifunctional protein (his-3).